Here is a 1080-residue protein sequence, read N- to C-terminus: Zorya protein ZorD (1080 aa).

A Helicase ATP-binding domain is found at 596 to 779; the sequence is LRSPEETAGC…WSLFDFAQPG (184 aa). A Helicase C-terminal domain is found at 904 to 1069; sequence KLNWLLKILA…DMLCATPDLS (166 aa).

Its function is as follows. Component of antiviral defense system Zorya type I, composed of ZorA, ZorB, ZorC and ZorD. Expression of Zorya type I in E.coli (strain MG1655) confers 10,000-fold resistance to phage SECphi27, 100-fold resistance to lambda, and 10-fold resistance to T7. While most T7 infected Zorya-containing cells undergo abortive infection, a minority produce viable phage progeny. These eventually accumulate to a high multiplicity of infection, leading to culture collapse by 2 hours after initial infection. ZorA and ZorB probably assemble in the cell inner membrane and exert their effect there. This may have ATPase activity. In Escherichia coli O139:H28 (strain E24377A / ETEC), this protein is Zorya protein ZorD.